The chain runs to 428 residues: C4-dicarboxylate transport protein (428 aa).

8 consecutive transmembrane segments (helical) span residues 8–28 (SLYF…HFYP), 44–64 (LIKM…IAGM), 76–96 (VALL…LIIV), 142–162 (IGAF…LFGF), 184–204 (VIFG…FGAM), 222–242 (LIIC…GSIA), 326–346 (IFHQ…AAGV), and 352–372 (IVLA…LALI).

It belongs to the dicarboxylate/amino acid:cation symporter (DAACS) (TC 2.A.23) family.

The protein localises to the cell inner membrane. Its function is as follows. Responsible for the transport of dicarboxylates such as succinate, fumarate, and malate from the periplasm across the membrane. This Enterobacter sp. (strain 638) protein is C4-dicarboxylate transport protein.